Consider the following 174-residue polypeptide: Histone deacetylase complex subunit SAP30 homolog (174 aa).

The Atypical zinc-finger motif lies at 22–70 (CCLLDDGERCRKQAGNASYSKRIQKTVTQRRLKLSIDSHARHIYICDFH).

The protein belongs to the SAP30 family. As to quaternary structure, component of the class 1 Sin3-histone deacetylase complex (HDAC).

Its subcellular location is the nucleus. Required for the function of the class 1 Sin3-histone deacetylase complex (HDAC). In Anopheles gambiae (African malaria mosquito), this protein is Histone deacetylase complex subunit SAP30 homolog.